Here is a 188-residue protein sequence, read N- to C-terminus: tRNA(Phe) 7-((3-amino-3-carboxypropyl)-4-demethylwyosine(37)-N(4))-methyltransferase (188 aa).

This sequence belongs to the TYW3 family.

The enzyme catalyses 4-demethyl-7-[(3S)-3-amino-3-carboxypropyl]wyosine(37) in tRNA(Phe) + S-adenosyl-L-methionine = 7-[(3S)-3-amino-3-carboxypropyl]wyosine(37) in tRNA(Phe) + S-adenosyl-L-homocysteine + H(+). Functionally, S-adenosyl-L-methionine-dependent methyltransferase that acts as a component of the wyosine derivatives biosynthesis pathway. Probably methylates N-4 position of wybutosine-86 to produce wybutosine-72. This chain is tRNA(Phe) 7-((3-amino-3-carboxypropyl)-4-demethylwyosine(37)-N(4))-methyltransferase, found in Aeropyrum pernix (strain ATCC 700893 / DSM 11879 / JCM 9820 / NBRC 100138 / K1).